A 322-amino-acid chain; its full sequence is Acetyl-coenzyme A carboxylase carboxyl transferase subunit alpha (322 aa).

A CoA carboxyltransferase C-terminal domain is found at 39–293 (RLAAKSQQLT…KRALAESLRQ (255 aa)).

Belongs to the AccA family. As to quaternary structure, acetyl-CoA carboxylase is a heterohexamer composed of biotin carboxyl carrier protein (AccB), biotin carboxylase (AccC) and two subunits each of ACCase subunit alpha (AccA) and ACCase subunit beta (AccD).

The protein localises to the cytoplasm. The catalysed reaction is N(6)-carboxybiotinyl-L-lysyl-[protein] + acetyl-CoA = N(6)-biotinyl-L-lysyl-[protein] + malonyl-CoA. It participates in lipid metabolism; malonyl-CoA biosynthesis; malonyl-CoA from acetyl-CoA: step 1/1. Its function is as follows. Component of the acetyl coenzyme A carboxylase (ACC) complex. First, biotin carboxylase catalyzes the carboxylation of biotin on its carrier protein (BCCP) and then the CO(2) group is transferred by the carboxyltransferase to acetyl-CoA to form malonyl-CoA. The polypeptide is Acetyl-coenzyme A carboxylase carboxyl transferase subunit alpha (Ralstonia nicotianae (strain ATCC BAA-1114 / GMI1000) (Ralstonia solanacearum)).